A 243-amino-acid polypeptide reads, in one-letter code: Orotidine 5'-phosphate decarboxylase (243 aa).

Substrate is bound by residues aspartate 18, lysine 39, 66-75 (DLKFHDIPTT), threonine 130, arginine 192, glutamine 201, glycine 221, and arginine 222. Catalysis depends on lysine 68, which acts as the Proton donor.

The protein belongs to the OMP decarboxylase family. Type 1 subfamily. Homodimer.

It catalyses the reaction orotidine 5'-phosphate + H(+) = UMP + CO2. It participates in pyrimidine metabolism; UMP biosynthesis via de novo pathway; UMP from orotate: step 2/2. In terms of biological role, catalyzes the decarboxylation of orotidine 5'-monophosphate (OMP) to uridine 5'-monophosphate (UMP). This chain is Orotidine 5'-phosphate decarboxylase, found in Synechococcus sp. (strain CC9311).